The following is a 217-amino-acid chain: Octanoyltransferase (217 aa).

One can recognise a BPL/LPL catalytic domain in the interval asparagine 32–histidine 207. Residues arginine 71–histidine 78, serine 138–glycine 140, and glycine 151–alanine 153 each bind substrate. The active-site Acyl-thioester intermediate is the cysteine 169.

It belongs to the LipB family.

The protein localises to the cytoplasm. The enzyme catalyses octanoyl-[ACP] + L-lysyl-[protein] = N(6)-octanoyl-L-lysyl-[protein] + holo-[ACP] + H(+). It functions in the pathway protein modification; protein lipoylation via endogenous pathway; protein N(6)-(lipoyl)lysine from octanoyl-[acyl-carrier-protein]: step 1/2. Functionally, catalyzes the transfer of endogenously produced octanoic acid from octanoyl-acyl-carrier-protein onto the lipoyl domains of lipoate-dependent enzymes. Lipoyl-ACP can also act as a substrate although octanoyl-ACP is likely to be the physiological substrate. The polypeptide is Octanoyltransferase (Shewanella oneidensis (strain ATCC 700550 / JCM 31522 / CIP 106686 / LMG 19005 / NCIMB 14063 / MR-1)).